A 124-amino-acid polypeptide reads, in one-letter code: Small ribosomal subunit protein bS6 (124 aa).

Residues 96 to 124 are disordered; it reads ETGPSPMMKEVQREEAKKSAATQPSEAQA. Over residues 115–124 the composition is skewed to polar residues; sequence AATQPSEAQA.

The protein belongs to the bacterial ribosomal protein bS6 family.

In terms of biological role, binds together with bS18 to 16S ribosomal RNA. The polypeptide is Small ribosomal subunit protein bS6 (Paraburkholderia phytofirmans (strain DSM 17436 / LMG 22146 / PsJN) (Burkholderia phytofirmans)).